The primary structure comprises 209 residues: MSKQKHSASSGRWLKEHFDDKYANEARKKGYRSRAYFKMEEIQTKDKLLTPGMTIVDLGAAPGGWSQYAAKIIGDNGQIIACDLLPMDPIAGVSFLQGDFREEAVLDALLERIQPNMVDVVMSDMAPNIAGNNSVDQPRAMYLVELALDMCRQVLATNGSFVVKVFQGEGFDQYVKDVREMFKTVKVRKPDSSRARSREVFIVATGYKG.

S-adenosyl-L-methionine contacts are provided by Gly-63, Trp-65, Asp-83, Asp-99, and Asp-124. The Proton acceptor role is filled by Lys-164.

Belongs to the class I-like SAM-binding methyltransferase superfamily. RNA methyltransferase RlmE family.

Its subcellular location is the cytoplasm. The catalysed reaction is uridine(2552) in 23S rRNA + S-adenosyl-L-methionine = 2'-O-methyluridine(2552) in 23S rRNA + S-adenosyl-L-homocysteine + H(+). In terms of biological role, specifically methylates the uridine in position 2552 of 23S rRNA at the 2'-O position of the ribose in the fully assembled 50S ribosomal subunit. This Vibrio atlanticus (strain LGP32) (Vibrio splendidus (strain Mel32)) protein is Ribosomal RNA large subunit methyltransferase E.